The primary structure comprises 544 residues: MTPSELKRLYHITKVQLEYGLDELLPEHALTQLPKRLRKGLFWIKNKYPEKPLGERLRLALQELGPVWIKFGQMMSTRRDLFPPHLADQLALLQDQVAPFDGQLAKDQMEMELGGPLDNWFTDFDIKPLASASIAQVHTAKLKDSGREIVLKVIRPDIRPVIESDIRLMYRMARLVEQHIPEARRLKPVEVIEEYEKTLLDELDLRREASNAMQLRRNFEGSEELYVPEVILDLSSEHLMVSERIYGIQVSDIEQLEKNGTNMKLLAERGVSVFFTQVFRDSFFHADMHPGNVFVNPDNPENPQWIGLDCGIVGTLNKEDKRYLAENLLGFFNSDYHKVAQLHVDSGWVPADTNVEEFEFAIRMVCEPIFAKPLGEISFGHVLLNLFNTARRFNMEVQPQLVLLQKTLLYVEGLGRQLYPQLDLWATAKPFLETWMAKQVGPAAFVTALSEKAPFWAEKLPELPDLVYDSLRQGKVLNQRMDKLYAGYRQSKRQQAKGQFLFNVGATLLICSAVLLTSNITVLASISAATGAAFWLFSWRAYRR.

The Protein kinase domain occupies 123 to 501 (DFDIKPLASA…KRQQAKGQFL (379 aa)). Residues 129–137 (LASASIAQV) and K152 contribute to the ATP site. Catalysis depends on D287, which acts as the Proton acceptor. Residues 515–537 (LLTSNITVLASISAATGAAFWLF) traverse the membrane as a helical segment.

This sequence belongs to the ABC1 family. UbiB subfamily.

It is found in the cell inner membrane. It participates in cofactor biosynthesis; ubiquinone biosynthesis [regulation]. Is probably a protein kinase regulator of UbiI activity which is involved in aerobic coenzyme Q (ubiquinone) biosynthesis. The sequence is that of Probable protein kinase UbiB from Aliivibrio fischeri (strain MJ11) (Vibrio fischeri).